A 311-amino-acid polypeptide reads, in one-letter code: Homeobox-leucine zipper protein HOX13 (311 aa).

Residues 1 to 74 (MKRPTSSSRK…PSCGLGEKKR (74 aa)) are disordered. Acidic residues predominate over residues 35–54 (DEAEMEEVDEEEEEEVDEDM). Residues 69-128 (LGEKKRRLALEQVRALERSFDTDNKLDPDRKARIARDLGLQPRQVAVWFQNRRARWKTKQ) constitute a DNA-binding region (homeobox). Positions 127–171 (KQLERDFAALRARHDALRADCDALRRDKDALAAEIRELREKLPTK) are leucine-zipper.

This sequence belongs to the HD-ZIP homeobox family. Class I subfamily. As to expression, expressed in seedlings, roots, stems, leaf sheaths and blades and panicles.

It localises to the nucleus. Its function is as follows. Probable transcription factor. The polypeptide is Homeobox-leucine zipper protein HOX13 (HOX13) (Oryza sativa subsp. japonica (Rice)).